Reading from the N-terminus, the 295-residue chain is UDP-N-acetylenolpyruvoylglucosamine reductase (295 aa).

In terms of domain architecture, FAD-binding PCMH-type spans 26–189 (VGGRADILFK…VEAEFKGVNS (164 aa)). Residue Arg-169 is part of the active site. Cys-218 serves as the catalytic Proton donor. Residue Glu-288 is part of the active site.

This sequence belongs to the MurB family. FAD serves as cofactor.

Its subcellular location is the cytoplasm. The catalysed reaction is UDP-N-acetyl-alpha-D-muramate + NADP(+) = UDP-N-acetyl-3-O-(1-carboxyvinyl)-alpha-D-glucosamine + NADPH + H(+). Its pathway is cell wall biogenesis; peptidoglycan biosynthesis. Functionally, cell wall formation. The sequence is that of UDP-N-acetylenolpyruvoylglucosamine reductase from Wolbachia sp. subsp. Drosophila simulans (strain wRi).